We begin with the raw amino-acid sequence, 347 residues long: Fe(2+) transport protein 1 (347 aa).

The N-terminal stretch at 1–22 is a signal peptide; sequence MASNSALLMKTIFLVLIFVSFA. Topologically, residues 23–52 are extracellular; it reads ISPATSTAPEECGSESANPCVNKAKALPLK. The chain crosses the membrane as a helical span at residues 53–73; it reads VIAIFVILIASMIGVGAPLFS. Over 74-84 the chain is Cytoplasmic; the sequence is RNVSFLQPDGN. A helical membrane pass occupies residues 85-105; the sequence is IFTIIKCFASGIILGTGFMHV. Topologically, residues 106-125 are extracellular; the sequence is LPDSFEMLSSICLEENPWHK. The chain crosses the membrane as a helical span at residues 126–146; sequence FPFSGFLAMLSGLITLAIDSM. The Cytoplasmic portion of the chain corresponds to 147-192; that stretch reads ATSLYTSKNAVGIMPHGHGHGHGPANDVTLPIKEDDSSNAQLLRYR. Residues Lys154 and Lys179 each participate in a glycyl lysine isopeptide (Lys-Gly) (interchain with G-Cter in ubiquitin) cross-link. A helical transmembrane segment spans residues 193–213; that stretch reads VIAMVLELGIIVHSVVIGLSL. Residues 214–224 lie on the Extracellular side of the membrane; that stretch reads GATSDTCTIKG. A helical membrane pass occupies residues 225-245; the sequence is LIAALCFHQMFEGMGLGGCIL. The Cytoplasmic segment spans residues 246-254; sequence QAEYTNMKK. The helical transmembrane segment at 255–275 threads the bilayer; sequence FVMAFFFAVTTPFGIALGIAL. The Extracellular portion of the chain corresponds to 276-286; sequence STVYQDNSPKA. Residues 287-307 form a helical membrane-spanning segment; the sequence is LITVGLLNACSAGLLIYMALV. Residues 308-326 lie on the Cytoplasmic side of the membrane; that stretch reads DLLAAEFMGPKLQGSIKMQ. A helical membrane pass occupies residues 327–347; that stretch reads FKCLIAALLGCGGMSIIAKWA.

Belongs to the ZIP transporter (TC 2.A.5) family. Interacts with FREE1. In terms of processing, monoubiquitinated on several Lys residues. Monoubiquitination controls trafficking from the plasma membrane and targeting to the vacuole. As to expression, expressed in the external cell layers of the root including the lateral branching zone. Also detected in flowers before pollination.

The protein resides in the cell membrane. It localises to the early endosome. Its subcellular location is the golgi apparatus. It is found in the trans-Golgi network. The protein localises to the vacuole. In terms of biological role, high-affinity iron transporter that plays a key role in the uptake of iron from the rhizosphere across the plasma membrane in the root epidermal layer. Acts as the principal regulator of iron homeostasis in planta. Also mediates the heavy metals uptake under iron-deficiency by its ability to transport cobalt, cadmium, manganese and/or zinc ions. This Arabidopsis thaliana (Mouse-ear cress) protein is Fe(2+) transport protein 1 (IRT1).